Here is a 175-residue protein sequence, read N- to C-terminus: Transcriptional activatory protein BadR (175 aa).

Residues 20-156 (ANRLFFRLYQ…TLHYLLKILD (137 aa)) enclose the HTH marR-type domain.

Functionally, transcriptional activator of genes for the anaerobic degradation of benzoate. The protein is Transcriptional activatory protein BadR (badR) of Rhodopseudomonas palustris (strain ATCC BAA-98 / CGA009).